Here is a 1273-residue protein sequence, read N- to C-terminus: Chitin synthase 7 (1273 aa).

A disordered region spans residues 1–69 (MPAVERNAPF…LINPSSGGPG (69 aa)). At 1-79 (MPAVERNAPF…FSAASRSKHR (79 aa)) the chain is on the cytoplasmic side. A helical transmembrane segment spans residues 80-100 (FSWWTAFSLFVTFWAPSPLLS). Residues 101–117 (SCCGLKDKQSRQAWREK) lie on the Extracellular side of the membrane. A helical membrane pass occupies residues 118–138 (VSLVFIAILLGGFIGFITMGL). The Cytoplasmic portion of the chain corresponds to 139 to 360 (NAALCPSASS…FISNLVLYCS (222 aa)). Residues 361-381 (LVVILAIVLIRFFMAVWFAWF) traverse the membrane as a helical segment. The Extracellular portion of the chain corresponds to 382–820 (MAGRMSSPPR…LCGTFCFSMQ (439 aa)). N-linked (GlcNAc...) asparagine glycosylation is present at asparagine 412. A disordered region spans residues 416–451 (AAPWANKQRPPPSQPARRRRDSAQSATPSVPDSLSV). N-linked (GlcNAc...) asparagine glycosylation is found at asparagine 667 and asparagine 796. Residues 821–841 (FVVFMDLLGTAVLPISIALTY) form a helical membrane-spanning segment. The Cytoplasmic portion of the chain corresponds to 842–857 (TLVVTYCLNPPHSFTE). Residues 858-878 (AIPLMLLVAVIGMPALLILLA) form a helical membrane-spanning segment. At 879–881 (TRK) the chain is on the extracellular side. The chain crosses the membrane as a helical span at residues 882 to 902 (VVYVLWMLIYLLALPVWNFVL). Over 903–1273 (PVYSFWHFDD…RGRSYHDRFS (371 aa)) the chain is Cytoplasmic. Disordered regions lie at residues 966–1009 (RELE…SVTV) and 1126–1273 (NGGG…DRFS). Over residues 1000 to 1009 (SDSFSDSVTV) the composition is skewed to low complexity. Residues 1215–1232 (QHPPQPSQPPQPPQPAQP) are compositionally biased toward pro residues. Positions 1233–1246 (TRPGGAPAAPPRGA) are enriched in low complexity.

This sequence belongs to the chitin synthase family. Class IV subfamily.

It localises to the cell membrane. The protein resides in the cytoplasmic vesicle membrane. It carries out the reaction [(1-&gt;4)-N-acetyl-beta-D-glucosaminyl](n) + UDP-N-acetyl-alpha-D-glucosamine = [(1-&gt;4)-N-acetyl-beta-D-glucosaminyl](n+1) + UDP + H(+). In terms of biological role, polymerizes chitin, a structural polymer of the cell wall and septum, by transferring the sugar moiety of UDP-GlcNAc to the non-reducing end of the growing chitin polymer. The sequence is that of Chitin synthase 7 from Mycosarcoma maydis (Corn smut fungus).